The primary structure comprises 303 residues: Phosphatidylglycerol--prolipoprotein diacylglyceryl transferase (303 aa).

4 helical membrane passes run 18–38 (LGPF…LVGL), 58–78 (LLPI…VAFE), 106–126 (IWGG…SIIF), and 133–153 (EPFW…QAIG). Arg154 contributes to the a 1,2-diacyl-sn-glycero-3-phospho-(1'-sn-glycerol) binding site. The next 3 helical transmembrane spans lie at 193–213 (PTFL…IFLF), 223–243 (LPPG…RFWI), and 266–286 (IAQL…WRIY).

Belongs to the Lgt family.

Its subcellular location is the cell inner membrane. It catalyses the reaction L-cysteinyl-[prolipoprotein] + a 1,2-diacyl-sn-glycero-3-phospho-(1'-sn-glycerol) = an S-1,2-diacyl-sn-glyceryl-L-cysteinyl-[prolipoprotein] + sn-glycerol 1-phosphate + H(+). Its pathway is protein modification; lipoprotein biosynthesis (diacylglyceryl transfer). Functionally, catalyzes the transfer of the diacylglyceryl group from phosphatidylglycerol to the sulfhydryl group of the N-terminal cysteine of a prolipoprotein, the first step in the formation of mature lipoproteins. The sequence is that of Phosphatidylglycerol--prolipoprotein diacylglyceryl transferase from Prochlorococcus marinus (strain NATL1A).